The primary structure comprises 617 residues: Vacuolar protein sorting-associated protein 33B (617 aa).

Belongs to the STXBP/unc-18/SEC1 family. In terms of assembly, interacts with vipas39. As to expression, widely expressed from 4 hours post-fertilization (hpf) to 24 hpf. At 48 hpf, localized to brain, retina, ear, liver and proximal intestine. This expression pattern is more pronounced at 72 hpf and persists through 5 days post-fertilization (dpf). At 3 dpf and 4 dpf, expression in the liver is predominantly in developing biliary epithelial cells. No expression detected in kidney or spinal cord.

The protein localises to the late endosome membrane. It localises to the lysosome membrane. In terms of biological role, may play a role in vesicle-mediated protein trafficking to lysosomal compartments and in membrane docking/fusion reactions of late endosomes/lysosomes. Required for proper trafficking and targeting of the collagen-modifying enzyme lysyl hydroxylase 3 (LH3) to intracellular collagen. Mediates phagolysosomal fusion in macrophages. Proposed to be involved in endosomal maturation implicating vipas39. In epithelial cells, the vps33b:vipas39 complex may play a role in the apical recycling pathway and in the maintenance of the apical-basolateral polarity. Plays a role in bile duct development. The sequence is that of Vacuolar protein sorting-associated protein 33B from Danio rerio (Zebrafish).